The sequence spans 323 residues: Beta-ketoacyl-[acyl-carrier-protein] synthase III (323 aa).

Active-site residues include cysteine 114 and histidine 250. Residues glutamine 251–arginine 255 form an ACP-binding region. Asparagine 280 is a catalytic residue.

This sequence belongs to the thiolase-like superfamily. FabH family. In terms of assembly, homodimer.

It is found in the cytoplasm. The enzyme catalyses malonyl-[ACP] + acetyl-CoA + H(+) = 3-oxobutanoyl-[ACP] + CO2 + CoA. The protein operates within lipid metabolism; fatty acid biosynthesis. Catalyzes the condensation reaction of fatty acid synthesis by the addition to an acyl acceptor of two carbons from malonyl-ACP. Catalyzes the first condensation reaction which initiates fatty acid synthesis and may therefore play a role in governing the total rate of fatty acid production. Possesses both acetoacetyl-ACP synthase and acetyl transacylase activities. Its substrate specificity determines the biosynthesis of branched-chain and/or straight-chain of fatty acids. In Ruegeria pomeroyi (strain ATCC 700808 / DSM 15171 / DSS-3) (Silicibacter pomeroyi), this protein is Beta-ketoacyl-[acyl-carrier-protein] synthase III.